A 180-amino-acid chain; its full sequence is Aspartate 1-decarboxylase (180 aa).

Serine 24 (schiff-base intermediate with substrate; via pyruvic acid) is an active-site residue. The residue at position 24 (serine 24) is a Pyruvic acid (Ser). Substrate is bound at residue threonine 56. Residue tyrosine 57 is the Proton donor of the active site. 72–74 (GAA) serves as a coordination point for substrate.

The protein belongs to the PanD family. As to quaternary structure, heterooctamer of four alpha and four beta subunits. The cofactor is pyruvate. In terms of processing, is synthesized initially as an inactive proenzyme, which is activated by self-cleavage at a specific serine bond to produce a beta-subunit with a hydroxyl group at its C-terminus and an alpha-subunit with a pyruvoyl group at its N-terminus.

The protein resides in the cytoplasm. The enzyme catalyses L-aspartate + H(+) = beta-alanine + CO2. It participates in cofactor biosynthesis; (R)-pantothenate biosynthesis; beta-alanine from L-aspartate: step 1/1. Catalyzes the pyruvoyl-dependent decarboxylation of aspartate to produce beta-alanine. The sequence is that of Aspartate 1-decarboxylase from Paramagnetospirillum magneticum (strain ATCC 700264 / AMB-1) (Magnetospirillum magneticum).